Here is a 553-residue protein sequence, read N- to C-terminus: Rhodopsin kinase GRK7 (553 aa).

Phosphoserine; by PKA is present on serine 36. Residues 56–176 enclose the RGS domain; it reads FNSLCEQQPI…LVSPFYDKFL (121 aa). One can recognise a Protein kinase domain in the interval 191–454; sequence FEEFRVLGKG…SDDPRKHHFF (264 aa). Residues 197–205 and lysine 220 each bind ATP; that span reads LGKGGFGEV. The Proton acceptor role is filled by aspartate 316. Residues 455–520 enclose the AGC-kinase C-terminal domain; sequence KTINFPRLEA…GAVPIAWQEE (66 aa). Cysteine methyl ester is present on cysteine 550. A lipid anchor (S-geranylgeranyl cysteine) is attached at cysteine 550. The propeptide at 551–553 is removed in mature form; it reads LLL.

This sequence belongs to the protein kinase superfamily. AGC Ser/Thr protein kinase family. GPRK subfamily. In terms of assembly, interacts (when prenylated) with PDE6D; this promotes release from membranes. Post-translationally, autophosphorylated in vitro at Ser-490. Phosphorylation at Ser-36 is regulated by light and activated by cAMP.

Its subcellular location is the membrane. It carries out the reaction L-threonyl-[rhodopsin] + ATP = O-phospho-L-threonyl-[rhodopsin] + ADP + H(+). It catalyses the reaction L-seryl-[rhodopsin] + ATP = O-phospho-L-seryl-[rhodopsin] + ADP + H(+). Its activity is regulated as follows. Inhibited by phosphorylation of Ser-36. Retina-specific kinase involved in the shutoff of the photoresponse and adaptation to changing light conditions via cone opsin phosphorylation, including rhodopsin (RHO). In Sus scrofa (Pig), this protein is Rhodopsin kinase GRK7 (GRK7).